A 578-amino-acid polypeptide reads, in one-letter code: Ketol-acid reductoisomerase, chloroplastic (578 aa).

The N-terminal 52 residues, 1–52 (MAASTTLALSHPKTLAAAAAAAPKAPTAPAAVSFPVSHAACAPLAARRRAVT), are a transit peptide targeting the chloroplast. The KARI N-terminal Rossmann domain occupies 90 to 288 (VRGGRNLFPL…ALGSPFTFAT (199 aa)). NADP(+) contacts are provided by residues 111-118 (GVIGWGSQ), 144-149 (RKGSKS), and 183-187 (SDAAQ). The active site involves His208. KARI C-terminal knotted domains lie at 289 to 437 (TLEQ…RPEN) and 438 to 574 (DLGP…RPEL). The Mg(2+) site is built by Asp297, Glu301, Glu474, and Glu478. Ser500 contacts substrate.

It belongs to the ketol-acid reductoisomerase family. Homodimer. It depends on Mg(2+) as a cofactor.

The protein resides in the plastid. It localises to the chloroplast. The catalysed reaction is (2R)-2,3-dihydroxy-3-methylbutanoate + NADP(+) = (2S)-2-acetolactate + NADPH + H(+). It catalyses the reaction (2R,3R)-2,3-dihydroxy-3-methylpentanoate + NADP(+) = (S)-2-ethyl-2-hydroxy-3-oxobutanoate + NADPH + H(+). It participates in amino-acid biosynthesis; L-isoleucine biosynthesis; L-isoleucine from 2-oxobutanoate: step 2/4. The protein operates within amino-acid biosynthesis; L-valine biosynthesis; L-valine from pyruvate: step 2/4. The chain is Ketol-acid reductoisomerase, chloroplastic from Oryza sativa subsp. japonica (Rice).